A 114-amino-acid polypeptide reads, in one-letter code: Large ribosomal subunit protein bL19 (114 aa).

This sequence belongs to the bacterial ribosomal protein bL19 family.

This protein is located at the 30S-50S ribosomal subunit interface and may play a role in the structure and function of the aminoacyl-tRNA binding site. This is Large ribosomal subunit protein bL19 from Desulfatibacillum aliphaticivorans.